The following is a 196-amino-acid chain: Large ribosomal subunit protein eL15 (196 aa).

Composition is skewed to basic residues over residues 160-172 and 186-196; these read ATRG…RKGR and PSIRAHKSRGK. Positions 160-196 are disordered; it reads ATRGKTSAGRKGRGMSTRGKGTEKTRPSIRAHKSRGK.

The protein belongs to the eukaryotic ribosomal protein eL15 family.

The sequence is that of Large ribosomal subunit protein eL15 (rpl15e) from Methanosarcina mazei (strain ATCC BAA-159 / DSM 3647 / Goe1 / Go1 / JCM 11833 / OCM 88) (Methanosarcina frisia).